Here is a 143-residue protein sequence, read N- to C-terminus: Large-conductance mechanosensitive channel (143 aa).

Transmembrane regions (helical) follow at residues 19–39 and 81–101; these read VGVI…GDLI and GSFL…FGVI.

Belongs to the MscL family. Homopentamer.

It localises to the cell inner membrane. Channel that opens in response to stretch forces in the membrane lipid bilayer. May participate in the regulation of osmotic pressure changes within the cell. This chain is Large-conductance mechanosensitive channel, found in Rhodopseudomonas palustris (strain BisB5).